The chain runs to 102 residues: Large ribosomal subunit protein bL21 (102 aa).

The protein belongs to the bacterial ribosomal protein bL21 family. Part of the 50S ribosomal subunit. Contacts protein L20.

In terms of biological role, this protein binds to 23S rRNA in the presence of protein L20. The protein is Large ribosomal subunit protein bL21 of Sulfurimonas denitrificans (strain ATCC 33889 / DSM 1251) (Thiomicrospira denitrificans (strain ATCC 33889 / DSM 1251)).